The sequence spans 86 residues: Large ribosomal subunit protein bL27 (86 aa).

Residues 1–24 (MATKKAGGSSRNGRDSAGRRLGVK) are disordered.

Belongs to the bacterial ribosomal protein bL27 family.

The polypeptide is Large ribosomal subunit protein bL27 (Rickettsia conorii (strain ATCC VR-613 / Malish 7)).